The chain runs to 288 residues: Proteasome assembly chaperone 1 (288 aa).

Position 2 is an N-acetylalanine (Ala2). Residues 12-38 form a disordered region; the sequence is TPCRAGTEEEEEEEDGNRETPEDREVR. Thr18 is subject to Phosphothreonine. The span at 28 to 38 shows a compositional bias: basic and acidic residues; that stretch reads NRETPEDREVR. A Phosphothreonine modification is found at Thr54. The residue at position 180 (Ser180) is a Phosphoserine. At Lys264 the chain carries N6-acetyllysine.

It belongs to the PSMG1 family. As to quaternary structure, forms a heterodimer with PSMG2. The PSMG1-PSMG2 heterodimer interacts directly with the PSMA5 and PSMA7 proteasome alpha subunits. In terms of processing, degraded by the proteasome upon completion of 20S proteasome maturation.

Its subcellular location is the cytoplasm. It is found in the endoplasmic reticulum. In terms of biological role, chaperone protein which promotes assembly of the 20S proteasome as part of a heterodimer with PSMG2. The PSMG1-PSMG2 heterodimer binds to the PSMA5 and PSMA7 proteasome subunits, promotes assembly of the proteasome alpha subunits into the heteroheptameric alpha ring and prevents alpha ring dimerization. This is Proteasome assembly chaperone 1 from Bos taurus (Bovine).